A 156-amino-acid polypeptide reads, in one-letter code: Small ribosomal subunit protein uS7 (156 aa).

The protein belongs to the universal ribosomal protein uS7 family. As to quaternary structure, part of the 30S ribosomal subunit. Contacts proteins S9 and S11.

In terms of biological role, one of the primary rRNA binding proteins, it binds directly to 16S rRNA where it nucleates assembly of the head domain of the 30S subunit. Is located at the subunit interface close to the decoding center, probably blocks exit of the E-site tRNA. The sequence is that of Small ribosomal subunit protein uS7 from Nitrobacter hamburgensis (strain DSM 10229 / NCIMB 13809 / X14).